Reading from the N-terminus, the 572-residue chain is MFS-type transporter pydD (572 aa).

Residues 1 to 15 (MLQEDKSSETMHDPS) show a composition bias toward basic and acidic residues. Positions 1 to 46 (MLQEDKSSETMHDPSTRGVETRNVTAVDSPLETATTSESPETERTN) are disordered. Asparagine 23 carries N-linked (GlcNAc...) asparagine glycosylation. The segment covering 29-39 (SPLETATTSES) has biased composition (low complexity). The next 8 membrane-spanning stretches (helical) occupy residues 56–76 (FWAL…EGTI), 88–108 (LGGG…MTAM), 123–143 (WPML…GGAT), 156–176 (GIGA…VVPL), 185–205 (IVMG…GLIV), 212–232 (WTFY…FSFL), 255–275 (ALFV…GSVY), and 282–302 (VLVP…FEGS). Residue asparagine 317 is glycosylated (N-linked (GlcNAc...) asparagine). 6 helical membrane-spanning segments follow: residues 321 to 341 (VGVM…LYFM), 358 to 378 (VQIL…GFLM), 386 to 406 (PIHY…SLLD), 419 to 439 (IVYS…LLAP), 451 to 471 (TWSF…AAVF), and 529 to 549 (WLVS…AREV).

The protein belongs to the major facilitator superfamily.

It is found in the membrane. In terms of biological role, MFS-type transporter; part of the gene cluster that mediates the biosynthesis of pyrrocidines, fungal natural products containing a macrocyclic para-cyclophane connected to a decahydrofluorene ring system that show potent antibiotic activities toward Gram-negative bacteria. The sequence is that of MFS-type transporter pydD from Acremonium sp.